The chain runs to 340 residues: Phosphoribosylformylglycinamidine cyclo-ligase (340 aa).

Belongs to the AIR synthase family.

It is found in the cytoplasm. The enzyme catalyses 2-formamido-N(1)-(5-O-phospho-beta-D-ribosyl)acetamidine + ATP = 5-amino-1-(5-phospho-beta-D-ribosyl)imidazole + ADP + phosphate + H(+). The protein operates within purine metabolism; IMP biosynthesis via de novo pathway; 5-amino-1-(5-phospho-D-ribosyl)imidazole from N(2)-formyl-N(1)-(5-phospho-D-ribosyl)glycinamide: step 2/2. The chain is Phosphoribosylformylglycinamidine cyclo-ligase from Lactococcus lactis subsp. cremoris (strain MG1363).